The chain runs to 319 residues: 12-(S)-hydroxy-5,8,10,14-eicosatetraenoic acid receptor (319 aa).

The Extracellular portion of the chain corresponds to 1–16 (MPFPNCSAPSTVVATA). Asn5 is a glycosylation site (N-linked (GlcNAc...) asparagine). The chain crosses the membrane as a helical span at residues 17-37 (VGVLLGLECGLGLLGNAVALW). Residues 38–52 (TFLFRVRVWKPYAVY) lie on the Cytoplasmic side of the membrane. Residues 53 to 73 (LLNLALADLLLAACLPFLAAF) form a helical membrane-spanning segment. The Extracellular segment spans residues 74 to 91 (YLSLQAWHLGRVGCWALH). A helical transmembrane segment spans residues 92–110 (FLLDLSRSVGMAFLAAVAL). The Cytoplasmic portion of the chain corresponds to 111 to 131 (DRYLRVVHPRLKVNLLSPQAA). The helical transmembrane segment at 132-152 (LGVSGLVWLLMVALTCPGLLI) threads the bilayer. The Extracellular portion of the chain corresponds to 153 to 180 (SEAAQNSTRCHSFYSRADGSFSIIWQEA). Residues 181–201 (LSCLQFVLPFGLIVFCNAGII) form a helical membrane-spanning segment. The Cytoplasmic portion of the chain corresponds to 202–219 (RALQKRLREPEKQPKLQR). A helical transmembrane segment spans residues 220–240 (AQALVTLVVVLFALCFLPCFL). The Extracellular portion of the chain corresponds to 241 to 265 (ARVLMHIFQNLGSCRALCAVAHTSD). A helical membrane pass occupies residues 266–284 (VTGSLTYLHSVLNPVVYCF). At 285-319 (SSPTFRSSYRRVFHTLRGKGQAAEPPDFNPRDSYS) the chain is on the cytoplasmic side.

This sequence belongs to the G-protein coupled receptor 1 family. In terms of assembly, interacts with KRAS; in a farnesylation-dependent manner.

The protein localises to the cell membrane. In terms of biological role, high-affinity receptor for 12-(S)-hydroxy-5,8,10,14-eicosatetraenoic acid (12-S-HETE), with much lower affinities for other HETE isomers. 12-S-HETE is a eicosanoid, a 12-lipoxygenase (ALOX12) metabolite of arachidonic acid, involved in many physiologic and pathologic processes. 12-S-HETE-binding leads to activation of ERK1/2 (MAPK3/MAPK1), MEK, and NF-kappa-B pathways leading to cell growth. Plays a crucial role for proliferation, survival and macropinocytosis of KRAS-dependent cancer cells by mediating the translocation of KRAS from the endoplasmic reticulum to the plasma membrane (PM) and its association with the PM. Contributes to enhanced immune responses by inducing dendrite protrusion of small intestinal CX3CR1(+) phagocytes for the uptake of luminal antigens. Acts also as a key receptor for 12-(S)-HETE-mediated liver ischemia reperfusion injury. Proton-sensing G protein-coupled receptor. The polypeptide is 12-(S)-hydroxy-5,8,10,14-eicosatetraenoic acid receptor (GPR31) (Homo sapiens (Human)).